Here is a 704-residue protein sequence, read N- to C-terminus: MTTTNRNNLKLTALTAAVLTLSACGGSDAVAENKNVKPAYLGEVASASYDGISDDLLTAGLGKTGLGGAAPAVVDPLSPTSAELRKLAIFNNYRAILDITAGGGYGTLYGPNVDAKGVVGASEGMIAGTEYIAYSDDGTGRQNITMMVQVPATFNPASPCIVTATSSGSRGVYGAIGSSGEWGLKNGCAVAYTDKGTGTGIHDLQNDTVNVQNGGRASATAAGKASIFTALLTSIERAAFNLATPNRFAIKHAHSQQNPEKDWGKWTLQSVEFAYFVLNQKYGDLASDGVAHLKKLTPANTIVIASSVSNGAGAALAAAEQDTQGLISGVAVAEPEVQLAPDARLSIVRGTTTLVGTGKQLLDYFTLANLLQPCAALVSPSTNVFNTVNAAIAGNRCSALKANGLITGTTTAEQAASAMAALVAAGWQPESSDLQASHYSFATLPVALTYANTYGRFGVADNLCGFSYAATGAATSATPLAPVPASAAVLATSFGTSNGVPPTAGINIVNNNSVGGPLLDAASLSVGGVQDYNIAGALCLRGLVTGTSANAVRVQQGMSEVLRSANLHGKPALIVQGRSDTLLPVAFTGRPYFGMNKIVEGANSRLSYIEVTNAQHFDAFLGFPGYANRLVPLHRYFIQAMDMMYANLKTGAALPTSQVVRTVPRGLAGTAANPITAANVPPIKAVADVADQITFANNVVTVAD.

The first 31 residues, 1–31 (MTTTNRNNLKLTALTAAVLTLSACGGSDAVA), serve as a signal peptide directing secretion. The active-site Charge relay system is the S309.

Belongs to the D-(-)-3-hydroxybutyrate oligomer hydrolase family.

Its subcellular location is the secreted. It carries out the reaction (3R)-hydroxybutanoate dimer + H2O = 2 (R)-3-hydroxybutanoate + H(+). The protein operates within lipid metabolism; butanoate metabolism. Participates in the degradation of poly-3-hydroxybutyrate (PHB). It works downstream of poly(3-hydroxybutyrate) depolymerase, hydrolyzing D(-)-3-hydroxybutyrate oligomers of various length (3HB-oligomers) into 3HB-monomers. The polypeptide is D-(-)-3-hydroxybutyrate oligomer hydrolase (Albidiferax ferrireducens (strain ATCC BAA-621 / DSM 15236 / T118) (Rhodoferax ferrireducens)).